The primary structure comprises 318 residues: Ribosomal RNA small subunit methyltransferase H (318 aa).

Residues Gly35–His37, Asp54, Phe83, Asp104, and Gln111 each bind S-adenosyl-L-methionine.

The protein belongs to the methyltransferase superfamily. RsmH family.

It localises to the cytoplasm. The enzyme catalyses cytidine(1402) in 16S rRNA + S-adenosyl-L-methionine = N(4)-methylcytidine(1402) in 16S rRNA + S-adenosyl-L-homocysteine + H(+). Its function is as follows. Specifically methylates the N4 position of cytidine in position 1402 (C1402) of 16S rRNA. The protein is Ribosomal RNA small subunit methyltransferase H of Latilactobacillus sakei subsp. sakei (strain 23K) (Lactobacillus sakei subsp. sakei).